The chain runs to 204 residues: Protein LURP-one-related 14 (204 aa).

The protein belongs to the LOR family.

In terms of biological role, might be related to the phospholipid scramblase and tubby-like superfamily of membrane tethered transcription factors. The sequence is that of Protein LURP-one-related 14 from Arabidopsis thaliana (Mouse-ear cress).